The chain runs to 71 residues: Cell division protein ZapB (71 aa).

Residues 5 to 67 (LEVLEQLESK…RALLGKMDQM (63 aa)) adopt a coiled-coil conformation.

This sequence belongs to the ZapB family. As to quaternary structure, homodimer. The ends of the coiled-coil dimer bind to each other, forming polymers. Interacts with FtsZ.

It localises to the cytoplasm. Non-essential, abundant cell division factor that is required for proper Z-ring formation. It is recruited early to the divisome by direct interaction with FtsZ, stimulating Z-ring assembly and thereby promoting cell division earlier in the cell cycle. Its recruitment to the Z-ring requires functional FtsA or ZipA. The sequence is that of Cell division protein ZapB from Aeromonas hydrophila subsp. hydrophila (strain ATCC 7966 / DSM 30187 / BCRC 13018 / CCUG 14551 / JCM 1027 / KCTC 2358 / NCIMB 9240 / NCTC 8049).